A 203-amino-acid polypeptide reads, in one-letter code: Putative 3-methyladenine DNA glycosylase (203 aa).

The protein belongs to the DNA glycosylase MPG family.

This chain is Putative 3-methyladenine DNA glycosylase, found in Clostridium botulinum (strain ATCC 19397 / Type A).